The chain runs to 256 residues: Type III pantothenate kinase (256 aa).

6 to 13 (DIGNTNIV) contacts ATP. Substrate is bound at residue 107–110 (GADI). Aspartate 109 functions as the Proton acceptor in the catalytic mechanism. Aspartate 129 provides a ligand contact to K(+). Threonine 132 serves as a coordination point for ATP. Residue threonine 184 participates in substrate binding.

This sequence belongs to the type III pantothenate kinase family. As to quaternary structure, homodimer. NH4(+) serves as cofactor. K(+) is required as a cofactor.

Its subcellular location is the cytoplasm. The enzyme catalyses (R)-pantothenate + ATP = (R)-4'-phosphopantothenate + ADP + H(+). It functions in the pathway cofactor biosynthesis; coenzyme A biosynthesis; CoA from (R)-pantothenate: step 1/5. Functionally, catalyzes the phosphorylation of pantothenate (Pan), the first step in CoA biosynthesis. This is Type III pantothenate kinase from Bifidobacterium longum (strain DJO10A).